Here is a 250-residue protein sequence, read N- to C-terminus: 5'-nucleotidase SurE (250 aa).

Residues D8, D9, S39, and N91 each contribute to the a divalent metal cation site.

It belongs to the SurE nucleotidase family. The cofactor is a divalent metal cation.

The protein resides in the cytoplasm. It catalyses the reaction a ribonucleoside 5'-phosphate + H2O = a ribonucleoside + phosphate. Its function is as follows. Nucleotidase that shows phosphatase activity on nucleoside 5'-monophosphates. The chain is 5'-nucleotidase SurE from Leptospira borgpetersenii serovar Hardjo-bovis (strain L550).